The sequence spans 423 residues: ATP-dependent Clp protease ATP-binding subunit ClpX (423 aa).

One can recognise a ClpX-type ZB domain in the interval M1–L50. Zn(2+)-binding residues include C9, C12, C31, and C34. P126–Y133 contributes to the ATP binding site.

This sequence belongs to the ClpX chaperone family. In terms of assembly, component of the ClpX-ClpP complex. Forms a hexameric ring that, in the presence of ATP, binds to fourteen ClpP subunits assembled into a disk-like structure with a central cavity, resembling the structure of eukaryotic proteasomes.

Functionally, ATP-dependent specificity component of the Clp protease. It directs the protease to specific substrates. Can perform chaperone functions in the absence of ClpP. The protein is ATP-dependent Clp protease ATP-binding subunit ClpX of Tropheryma whipplei (strain TW08/27) (Whipple's bacillus).